Reading from the N-terminus, the 125-residue chain is Large ribosomal subunit protein bL12 (125 aa).

It belongs to the bacterial ribosomal protein bL12 family. As to quaternary structure, homodimer. Part of the ribosomal stalk of the 50S ribosomal subunit. Forms a multimeric L10(L12)X complex, where L10 forms an elongated spine to which 2 to 4 L12 dimers bind in a sequential fashion. Binds GTP-bound translation factors.

Forms part of the ribosomal stalk which helps the ribosome interact with GTP-bound translation factors. Is thus essential for accurate translation. This Mesorhizobium japonicum (strain LMG 29417 / CECT 9101 / MAFF 303099) (Mesorhizobium loti (strain MAFF 303099)) protein is Large ribosomal subunit protein bL12.